A 348-amino-acid chain; its full sequence is Holliday junction branch migration complex subunit RuvB (348 aa).

The tract at residues 4 to 198 is large ATPase domain (RuvB-L); the sequence is TTDYGASNTG…FGFTAHLDFY (195 aa). Residues leucine 37, arginine 38, glycine 79, lysine 82, threonine 83, threonine 84, 145-147, arginine 188, tyrosine 198, and arginine 235 each bind ATP; that span reads EDF. Threonine 83 contributes to the Mg(2+) binding site. Residues 199–269 are small ATPAse domain (RuvB-S); it reads PHEELEKLIE…DVKEALALYQ (71 aa). The head domain (RuvB-H) stretch occupies residues 272 to 348; sequence SEGLDRLDIA…DIIFGNYAQR (77 aa). The DNA site is built by arginine 327 and arginine 332.

Belongs to the RuvB family. Homohexamer. Forms an RuvA(8)-RuvB(12)-Holliday junction (HJ) complex. HJ DNA is sandwiched between 2 RuvA tetramers; dsDNA enters through RuvA and exits via RuvB. An RuvB hexamer assembles on each DNA strand where it exits the tetramer. Each RuvB hexamer is contacted by two RuvA subunits (via domain III) on 2 adjacent RuvB subunits; this complex drives branch migration. In the full resolvosome a probable DNA-RuvA(4)-RuvB(12)-RuvC(2) complex forms which resolves the HJ.

The protein resides in the cytoplasm. It catalyses the reaction ATP + H2O = ADP + phosphate + H(+). Functionally, the RuvA-RuvB-RuvC complex processes Holliday junction (HJ) DNA during genetic recombination and DNA repair, while the RuvA-RuvB complex plays an important role in the rescue of blocked DNA replication forks via replication fork reversal (RFR). RuvA specifically binds to HJ cruciform DNA, conferring on it an open structure. The RuvB hexamer acts as an ATP-dependent pump, pulling dsDNA into and through the RuvAB complex. RuvB forms 2 homohexamers on either side of HJ DNA bound by 1 or 2 RuvA tetramers; 4 subunits per hexamer contact DNA at a time. Coordinated motions by a converter formed by DNA-disengaged RuvB subunits stimulates ATP hydrolysis and nucleotide exchange. Immobilization of the converter enables RuvB to convert the ATP-contained energy into a lever motion, pulling 2 nucleotides of DNA out of the RuvA tetramer per ATP hydrolyzed, thus driving DNA branch migration. The RuvB motors rotate together with the DNA substrate, which together with the progressing nucleotide cycle form the mechanistic basis for DNA recombination by continuous HJ branch migration. Branch migration allows RuvC to scan DNA until it finds its consensus sequence, where it cleaves and resolves cruciform DNA. The chain is Holliday junction branch migration complex subunit RuvB from Bifidobacterium longum (strain DJO10A).